The chain runs to 241 residues: Probable FKBP-type peptidyl-prolyl cis-trans isomerase (241 aa).

A PPIase FKBP-type domain is found at 150–241 (TDTVKVHYTG…VLDVNPKSEK (92 aa)).

The protein belongs to the FKBP-type PPIase family.

The catalysed reaction is [protein]-peptidylproline (omega=180) = [protein]-peptidylproline (omega=0). PPIases accelerate the folding of proteins. It catalyzes the cis-trans isomerization of proline imidic peptide bonds in oligopeptides. The protein is Probable FKBP-type peptidyl-prolyl cis-trans isomerase of Haemophilus influenzae (strain ATCC 51907 / DSM 11121 / KW20 / Rd).